The following is a 528-amino-acid chain: GMP synthase [glutamine-hydrolyzing] (528 aa).

The region spanning 13-204 is the Glutamine amidotransferase type-1 domain; it reads SILILDFGSQ…VYKISCCAAD (192 aa). Residue cysteine 90 is the Nucleophile of the active site. Active-site residues include histidine 178 and glutamate 180. Residues 205 to 403 form the GMPS ATP-PPase domain; sequence WTTETYIEET…LGLPAEIIKR (199 aa). 232–238 contacts ATP; it reads SGGVDSS.

As to quaternary structure, homodimer.

The enzyme catalyses XMP + L-glutamine + ATP + H2O = GMP + L-glutamate + AMP + diphosphate + 2 H(+). The protein operates within purine metabolism; GMP biosynthesis; GMP from XMP (L-Gln route): step 1/1. In terms of biological role, catalyzes the synthesis of GMP from XMP. This chain is GMP synthase [glutamine-hydrolyzing], found in Prochlorococcus marinus (strain MIT 9215).